We begin with the raw amino-acid sequence, 473 residues long: Ribulose bisphosphate carboxylase large chain (473 aa).

Substrate-binding residues include Asn-116 and Thr-166. Catalysis depends on Lys-168, which acts as the Proton acceptor. Lys-170 is a binding site for substrate. Positions 194, 196, and 197 each coordinate Mg(2+). Lys-194 bears the N6-carboxylysine mark. His-287 (proton acceptor) is an active-site residue. Substrate is bound by residues Arg-288, His-320, and Ser-372.

This sequence belongs to the RuBisCO large chain family. Type I subfamily. As to quaternary structure, heterohexadecamer of 8 large chains and 8 small chains. Mg(2+) is required as a cofactor.

The enzyme catalyses 2 (2R)-3-phosphoglycerate + 2 H(+) = D-ribulose 1,5-bisphosphate + CO2 + H2O. It catalyses the reaction D-ribulose 1,5-bisphosphate + O2 = 2-phosphoglycolate + (2R)-3-phosphoglycerate + 2 H(+). In terms of biological role, ruBisCO catalyzes two reactions: the carboxylation of D-ribulose 1,5-bisphosphate, the primary event in carbon dioxide fixation, as well as the oxidative fragmentation of the pentose substrate. Both reactions occur simultaneously and in competition at the same active site. This Nitrosomonas sp. (strain ENI-11) protein is Ribulose bisphosphate carboxylase large chain.